The sequence spans 333 residues: 1D-myo-inositol 2-acetamido-2-deoxy-alpha-D-glucopyranoside deacetylase (333 aa).

Positions 18, 21, and 165 each coordinate Zn(2+).

It belongs to the MshB deacetylase family. The cofactor is Zn(2+).

The catalysed reaction is 1D-myo-inositol 2-acetamido-2-deoxy-alpha-D-glucopyranoside + H2O = 1D-myo-inositol 2-amino-2-deoxy-alpha-D-glucopyranoside + acetate. Its function is as follows. Catalyzes the deacetylation of 1D-myo-inositol 2-acetamido-2-deoxy-alpha-D-glucopyranoside (GlcNAc-Ins) in the mycothiol biosynthesis pathway. This Corynebacterium jeikeium (strain K411) protein is 1D-myo-inositol 2-acetamido-2-deoxy-alpha-D-glucopyranoside deacetylase.